A 90-amino-acid polypeptide reads, in one-letter code: Large ribosomal subunit protein bL27 (90 aa).

The tract at residues methionine 1 to leucine 21 is disordered.

The protein belongs to the bacterial ribosomal protein bL27 family.

In Nitrobacter winogradskyi (strain ATCC 25391 / DSM 10237 / CIP 104748 / NCIMB 11846 / Nb-255), this protein is Large ribosomal subunit protein bL27.